A 1024-amino-acid polypeptide reads, in one-letter code: Carbamoyl phosphate synthase large chain (1024 aa).

Residues 1–396 (MDIKKILVIG…AWQKAVRMID (396 aa)) form a carboxyphosphate synthetic domain region. ATP-binding residues include arginine 125, arginine 165, glycine 171, glycine 172, lysine 204, leucine 206, glutamate 211, glycine 237, valine 238, histidine 239, glutamine 280, and glutamate 294. An ATP-grasp 1 domain is found at 129–323 (QKAMREAGIP…LAYIAAKLAL (195 aa)). Mg(2+) is bound by residues glutamine 280, glutamate 294, and asparagine 296. Mn(2+) contacts are provided by glutamine 280, glutamate 294, and asparagine 296. Positions 397 to 536 (IGEPGLVGGP…LTYGGQYDDK (140 aa)) are oligomerization domain. The segment at 536–917 (KTPGVDYLVV…LKSWLSATPN (382 aa)) is carbamoyl phosphate synthetic domain. In terms of domain architecture, ATP-grasp 2 spans 660–849 (SKLLDRLGIK…YMSLVADVLT (190 aa)). Residues arginine 696, lysine 735, glutamate 742, glycine 766, valine 767, histidine 768, serine 769, glutamine 809, and glutamate 820 each contribute to the ATP site. Residues glutamine 809, glutamate 820, and asparagine 822 each contribute to the Mg(2+) site. Residues glutamine 809, glutamate 820, and asparagine 822 each coordinate Mn(2+). Residues 917 to 1024 (NKIPSKTALI…KNGKLEVAPW (108 aa)) enclose the MGS-like domain. Residues 918–1024 (KIPSKTALIY…KNGKLEVAPW (107 aa)) form an allosteric domain region.

This sequence belongs to the CarB family. As to quaternary structure, composed of two chains; the small (or glutamine) chain promotes the hydrolysis of glutamine to ammonia, which is used by the large (or ammonia) chain to synthesize carbamoyl phosphate. Tetramer of heterodimers (alpha,beta)4. Requires Mg(2+) as cofactor. The cofactor is Mn(2+).

It catalyses the reaction hydrogencarbonate + L-glutamine + 2 ATP + H2O = carbamoyl phosphate + L-glutamate + 2 ADP + phosphate + 2 H(+). The enzyme catalyses hydrogencarbonate + NH4(+) + 2 ATP = carbamoyl phosphate + 2 ADP + phosphate + 2 H(+). It functions in the pathway amino-acid biosynthesis; L-arginine biosynthesis; carbamoyl phosphate from bicarbonate: step 1/1. It participates in pyrimidine metabolism; UMP biosynthesis via de novo pathway; (S)-dihydroorotate from bicarbonate: step 1/3. Its function is as follows. Large subunit of the glutamine-dependent carbamoyl phosphate synthetase (CPSase). CPSase catalyzes the formation of carbamoyl phosphate from the ammonia moiety of glutamine, carbonate, and phosphate donated by ATP, constituting the first step of 2 biosynthetic pathways, one leading to arginine and/or urea and the other to pyrimidine nucleotides. The large subunit (synthetase) binds the substrates ammonia (free or transferred from glutamine from the small subunit), hydrogencarbonate and ATP and carries out an ATP-coupled ligase reaction, activating hydrogencarbonate by forming carboxy phosphate which reacts with ammonia to form carbamoyl phosphate. The polypeptide is Carbamoyl phosphate synthase large chain (Pyrobaculum aerophilum (strain ATCC 51768 / DSM 7523 / JCM 9630 / CIP 104966 / NBRC 100827 / IM2)).